We begin with the raw amino-acid sequence, 165 residues long: Lipoprotein signal peptidase (165 aa).

Transmembrane regions (helical) follow at residues 12 to 32 (WLWLVVVVLIVDLGSKALILQ), 70 to 90 (WFFAGIAIGICVLLVVMMYRA), and 102 to 122 (ALIIGGALGNLFDRLWHGFVV). Active-site residues include Asp-123 and Asp-141. Residues 137–157 (FNLADTAICIGAALVVLEGFL) form a helical membrane-spanning segment.

This sequence belongs to the peptidase A8 family.

It localises to the cell inner membrane. The catalysed reaction is Release of signal peptides from bacterial membrane prolipoproteins. Hydrolyzes -Xaa-Yaa-Zaa-|-(S,diacylglyceryl)Cys-, in which Xaa is hydrophobic (preferably Leu), and Yaa (Ala or Ser) and Zaa (Gly or Ala) have small, neutral side chains.. The protein operates within protein modification; lipoprotein biosynthesis (signal peptide cleavage). Functionally, this protein specifically catalyzes the removal of signal peptides from prolipoproteins. This chain is Lipoprotein signal peptidase, found in Cronobacter sakazakii (strain ATCC BAA-894) (Enterobacter sakazakii).